Consider the following 496-residue polypeptide: Aspartyl/glutamyl-tRNA(Asn/Gln) amidotransferase subunit B (496 aa).

The protein belongs to the GatB/GatE family. GatB subfamily. As to quaternary structure, heterotrimer of A, B and C subunits.

It carries out the reaction L-glutamyl-tRNA(Gln) + L-glutamine + ATP + H2O = L-glutaminyl-tRNA(Gln) + L-glutamate + ADP + phosphate + H(+). It catalyses the reaction L-aspartyl-tRNA(Asn) + L-glutamine + ATP + H2O = L-asparaginyl-tRNA(Asn) + L-glutamate + ADP + phosphate + 2 H(+). Functionally, allows the formation of correctly charged Asn-tRNA(Asn) or Gln-tRNA(Gln) through the transamidation of misacylated Asp-tRNA(Asn) or Glu-tRNA(Gln) in organisms which lack either or both of asparaginyl-tRNA or glutaminyl-tRNA synthetases. The reaction takes place in the presence of glutamine and ATP through an activated phospho-Asp-tRNA(Asn) or phospho-Glu-tRNA(Gln). The protein is Aspartyl/glutamyl-tRNA(Asn/Gln) amidotransferase subunit B of Nitrosospira multiformis (strain ATCC 25196 / NCIMB 11849 / C 71).